A 145-amino-acid polypeptide reads, in one-letter code: MRAAGTLLAFCCLVLSTTGGPSPDTCSQDLNSRVKPGFPKTIKTNDPGVLQAARYSVEKFNNCTNDMFLFKESRITRALVQIVKGLKYMLEVEIGRTTCKKNQHLRLDDCDFQTNHTLKQTLSCYSEVWVVPWLQHFEVPVLRCH.

An N-terminal signal peptide occupies residues 1–19 (MRAAGTLLAFCCLVLSTTG). N62 carries N-linked (GlcNAc...) asparagine glycosylation. Positions 81–85 (QIVKG) match the Secondary area of contact motif. The cysteines at positions 99 and 110 are disulfide-linked. The N-linked (GlcNAc...) asparagine glycan is linked to N115. C124 and C144 are oxidised to a cystine.

This sequence belongs to the cystatin family. As to quaternary structure, homodimer; disulfide-linked. Primarily expressed in peripheral blood cells and spleen.

It is found in the secreted. Its subcellular location is the cytoplasm. Its function is as follows. Inhibits papain and cathepsin L but with affinities lower than other cystatins. May play a role in immune regulation through inhibition of a unique target in the hematopoietic system. The polypeptide is Cystatin-F (CST7) (Homo sapiens (Human)).